We begin with the raw amino-acid sequence, 88 residues long: Beta-insect excitatory toxin 1 (88 aa).

Positions 1–18 are cleaved as a signal peptide; sequence MKFLLLFLVVLPIMGVFG. The LCN-type CS-alpha/beta domain occupies 20 to 83; that stretch reads KNGYAVDSSG…ISDTRKSYCD (64 aa). Intrachain disulfides connect cysteine 34-cysteine 55, cysteine 40-cysteine 60, cysteine 44-cysteine 62, and cysteine 56-cysteine 82.

The protein belongs to the long (4 C-C) scorpion toxin superfamily. Sodium channel inhibitor family. Beta subfamily. As to expression, expressed by the venom gland.

The protein resides in the secreted. Excitatory insect beta-toxins induce a spastic paralysis. They bind voltage-independently at site-4 of sodium channels (Nav) and shift the voltage of activation toward more negative potentials thereby affecting sodium channel activation and promoting spontaneous and repetitive firing. This toxin is active only on insects. The polypeptide is Beta-insect excitatory toxin 1 (Androctonus australis (Sahara scorpion)).